The following is a 530-amino-acid chain: Cytochrome P450 2U1 (530 aa).

Transmembrane regions (helical) follow at residues 21–41 (LQAV…DWVW), 99–119 (VYGN…LSDF), 247–267 (ICLH…YLPF), and 328–348 (LFYI…NSLL). C476 contacts heme. The helical transmembrane segment at 481-501 (LAKMELFLMFVSLMQSFTFAL) threads the bilayer.

This sequence belongs to the cytochrome P450 family. The cofactor is heme. In terms of tissue distribution, specifically expressed in thymus and brain. In brain, expressed in cortex, cerebellum, olfactory bulbs, pons and medulla and the limbic structures (at protein level).

It localises to the endoplasmic reticulum membrane. The protein localises to the microsome membrane. It is found in the mitochondrion inner membrane. It catalyses the reaction an omega-methyl-long-chain fatty acid + reduced [NADPH--hemoprotein reductase] + O2 = an omega-hydroxy-long-chain fatty acid + oxidized [NADPH--hemoprotein reductase] + H2O + H(+). The enzyme catalyses (5Z,8Z,11Z,14Z)-eicosatetraenoate + reduced [NADPH--hemoprotein reductase] + O2 = 19-hydroxy-(5Z,8Z,11Z,14Z)-eicosatetraenoate + oxidized [NADPH--hemoprotein reductase] + H2O + H(+). It carries out the reaction (5Z,8Z,11Z,14Z)-eicosatetraenoate + reduced [NADPH--hemoprotein reductase] + O2 = 20-hydroxy-(5Z,8Z,11Z,14Z)-eicosatetraenoate + oxidized [NADPH--hemoprotein reductase] + H2O + H(+). The catalysed reaction is N-[(5Z,8Z,11Z,14Z)-eicosatetraenoyl]-serotonin + reduced [NADPH--hemoprotein reductase] + O2 = 2-oxo-N-[(5Z,8Z,11Z,14Z)-eicosatetraenoyl]-serotonin + oxidized [NADPH--hemoprotein reductase] + H2O + H(+). In terms of biological role, a cytochrome P450 monooxygenase involved in the metabolism of arachidonic acid and its conjugates. Mechanistically, uses molecular oxygen inserting one oxygen atom into a substrate, and reducing the second into a water molecule, with two electrons provided by NADPH via cytochrome P450 reductase (CPR; NADPH-ferrihemoprotein reductase). Acts as an omega and omega-1 hydroxylase for arachidonic acid and possibly for other long chain fatty acids. May modulate the arachidonic acid signaling pathway and play a role in other fatty acid signaling processes. May down-regulate the biological activities of N-arachidonoyl-serotonin, an endocannabinoid that has anti-nociceptive effects through inhibition of fatty acid amide hydrolase FAAH, TRPV1 receptor and T-type calcium channels. Catalyzes C-2 oxidation of the indole ring of N-arachidonoyl-serotonin forming a less active product 2-oxo-N-arachidonoyl-serotonin. This chain is Cytochrome P450 2U1 (Cyp2u1), found in Rattus norvegicus (Rat).